Consider the following 318-residue polypeptide: Ubiquinone biosynthesis protein COQ9, mitochondrial (318 aa).

Residues 1–44 (MAAAAVSGALGRAGWRLLQLRCLPVARCRQALVPRAFHASAVGL) constitute a mitochondrion transit peptide. Residues 16–31 (RLLQLRCLPVARCRQA) carry the SIFI-degron motif. A disordered region spans residues 44–98 (LRSSDEQKQQPPNSFSQQHSETQGAEKPDPESSHSPPRYTDQGGEEEEDYESEEQ). The segment covering 52-66 (QQPPNSFSQQHSETQ) has biased composition (polar residues). Residues 86-97 (GGEEEEDYESEE) show a composition bias toward acidic residues. K175 is subject to N6-acetyllysine. R244 serves as a coordination point for a 1,2-diacylglycero-3-phosphoethanolamine.

It belongs to the COQ9 family. As to quaternary structure, homodimer. Heterodimer; two heterodimers of COQ7:COQ9 come together on the same side of the lipid pseudo-bilayer and form a curved tetramer with a hydrophobic surface suitable for membrane interaction. These two tetramers assemble into a soluble octamer with a pseudo-bilayer of lipids captured within. Interacts with COQ7; this interaction allows ubiquinone (CoQ) isoprene intermediates presentation to COQ7 and facilitates the COQ7-mediated hydroxylase step. Post-translationally, in response to mitochondrial stress, the precursor protein is ubiquitinated by the SIFI complex in the cytoplasm before mitochondrial import, leading to its degradation. Within the SIFI complex, UBR4 initiates ubiquitin chain that are further elongated or branched by KCMF1.

Its subcellular location is the mitochondrion. It functions in the pathway cofactor biosynthesis; ubiquinone biosynthesis. Its function is as follows. Membrane-associated protein that warps the membrane surface to access and bind aromatic isoprenes with high specificity, including ubiquinone (CoQ) isoprene intermediates and presents them directly to COQ7, therefore facilitating the COQ7-mediated hydroxylase step. Participates in the biosynthesis of coenzyme Q, also named ubiquinone, an essential lipid-soluble electron transporter for aerobic cellular respiration. This is Ubiquinone biosynthesis protein COQ9, mitochondrial from Homo sapiens (Human).